The chain runs to 337 residues: DNA-directed RNA polymerase subunit alpha (337 aa).

Residues 1 to 233 (MIQKNWQELI…DQLSIFVNFE (233 aa)) form an alpha N-terminal domain (alpha-NTD) region. Residues 249–337 (FNPALLKKVD…DLAKRYEDQY (89 aa)) are alpha C-terminal domain (alpha-CTD).

Belongs to the RNA polymerase alpha chain family. As to quaternary structure, homodimer. The RNAP catalytic core consists of 2 alpha, 1 beta, 1 beta' and 1 omega subunit. When a sigma factor is associated with the core the holoenzyme is formed, which can initiate transcription.

The enzyme catalyses RNA(n) + a ribonucleoside 5'-triphosphate = RNA(n+1) + diphosphate. In terms of biological role, DNA-dependent RNA polymerase catalyzes the transcription of DNA into RNA using the four ribonucleoside triphosphates as substrates. In Brucella suis (strain ATCC 23445 / NCTC 10510), this protein is DNA-directed RNA polymerase subunit alpha.